Consider the following 421-residue polypeptide: MYLMCVSLNYHQLPLDLREKFSFTKEEVPKADKLLNDEKSILENLLISTCNRTEVYAVVDQIHTGRYYIRRFLAEWFHYTIDDFTKFVTVTTKDAVAEHLFKVITGLDSLIKGEPQILGQMKDAFQIATKEGTTGAILNHLFRQAITFSKRMHTKYRVSELAQSSGQAGLHQIKMQFGSLEGKTLAVVGLGQIGKHTAYNASNMGFSKVLLLNRTDSKAEQIATELQGVVEARPFNQLATVVHNVDAAIFAATVKQPLFKADEQISTMIVDLGVPRNVAVNSTKLKYYDVDHVHMILNSNDEKRRLMIQKIANEIPQEVNDFYIWEKQLHIVPVIRGLREHSLRIEGEAYDSLLRKLPELDSHERKVISKHMKSIVNQMIKGPIKEIKELSVTPGATADIDFFCKIFGMDNLKVENQNNDK.

Substrate contacts are provided by residues 49–52, Ser-109, 114–116, and Gln-120; these read TCNR and EPQ. The active-site Nucleophile is Cys-50. 189–194 lines the NADP(+) pocket; it reads GLGQIG.

Belongs to the glutamyl-tRNA reductase family. Homodimer.

The catalysed reaction is (S)-4-amino-5-oxopentanoate + tRNA(Glu) + NADP(+) = L-glutamyl-tRNA(Glu) + NADPH + H(+). The protein operates within porphyrin-containing compound metabolism; protoporphyrin-IX biosynthesis; 5-aminolevulinate from L-glutamyl-tRNA(Glu): step 1/2. Functionally, catalyzes the NADPH-dependent reduction of glutamyl-tRNA(Glu) to glutamate 1-semialdehyde (GSA). This chain is Glutamyl-tRNA reductase, found in Limosilactobacillus reuteri (strain DSM 20016) (Lactobacillus reuteri).